Consider the following 164-residue polypeptide: Peptidyl-prolyl cis-trans isomerase A-like 4G (164 aa).

The PPIase cyclophilin-type domain maps to 7–163 (FFDITVDGKP…KKITIADCGQ (157 aa)).

It belongs to the cyclophilin-type PPIase family. PPIase A subfamily.

The protein resides in the cytoplasm. It catalyses the reaction [protein]-peptidylproline (omega=180) = [protein]-peptidylproline (omega=0). In terms of biological role, PPIases accelerate the folding of proteins. It catalyzes the cis-trans isomerization of proline imidic peptide bonds in oligopeptides. The polypeptide is Peptidyl-prolyl cis-trans isomerase A-like 4G (PPIAL4G) (Homo sapiens (Human)).